The primary structure comprises 934 residues: Desmocollin 2-like protein (934 aa).

4 consecutive Cadherin domains span residues 167–274 (RWRP…APEF), 274–381 (FTGN…PPTF), 382–494 (KEKL…GPEF), and 495–600 (NPNI…IPVI). At 167-716 (RWRPLPFSVV…SASVSLGNYG (550 aa)) the chain is on the extracellular side. Residues asparagine 197, asparagine 296, and asparagine 316 are each glycosylated (N-linked (GlcNAc...) asparagine). Residues asparagine 509, asparagine 565, and asparagine 569 are each glycosylated (N-linked (GlcNAc...) asparagine). The chain crosses the membrane as a helical span at residues 717–737 (ILALVLSGLLLLLLCLFLIFF). The Cytoplasmic portion of the chain corresponds to 738-934 (CTTKRDKLQI…ICYTTNKTGK (197 aa)).

In terms of tissue distribution, expressed at low levels in the brain and heart.

It is found in the cell junction. It localises to the desmosome. The protein localises to the cell membrane. In terms of biological role, a component of desmosome cell-cell junctions which are required for positive regulation of cellular adhesion. Involved in the interaction of plaque proteins and intermediate filaments mediating cell-cell adhesion. Involved in the formation and structural organization of desmosome cell-cell junctions during embryonic development. Required for embryogenesis, specifically for progression of epiboly and normal convergence-extension movements during gastrulation. Required for the development of desmosomal-rich midlines in the heart. Plays an important role in ventricular contraction and resulting heart stroke volume. This is Desmocollin 2-like protein from Danio rerio (Zebrafish).